The chain runs to 409 residues: uncharacterized protein (409 aa).

In terms of domain architecture, HTH arsR-type spans 305–409; that stretch reads LTKIDEKVVK…LIGEDDELEM (105 aa).

This is an uncharacterized protein from Methanocaldococcus jannaschii (strain ATCC 43067 / DSM 2661 / JAL-1 / JCM 10045 / NBRC 100440) (Methanococcus jannaschii).